A 245-amino-acid polypeptide reads, in one-letter code: uncharacterized protein (245 aa).

A compositionally biased stretch (basic and acidic residues) spans 162 to 174; the sequence is KEQSDVTTSERTR. A disordered region spans residues 162-183; sequence KEQSDVTTSERTRSPPGSSKTT.

This is an uncharacterized protein from Homo sapiens (Human).